Here is a 156-residue protein sequence, read N- to C-terminus: Deoxyuridine 5'-triphosphate nucleotidohydrolase (156 aa).

Substrate-binding positions include 74–76, asparagine 87, 91–93, and lysine 101; these read RSG and TID.

This sequence belongs to the dUTPase family. Requires Mg(2+) as cofactor.

It catalyses the reaction dUTP + H2O = dUMP + diphosphate + H(+). Its pathway is pyrimidine metabolism; dUMP biosynthesis; dUMP from dCTP (dUTP route): step 2/2. Its function is as follows. This enzyme is involved in nucleotide metabolism: it produces dUMP, the immediate precursor of thymidine nucleotides and it decreases the intracellular concentration of dUTP so that uracil cannot be incorporated into DNA. This Wolbachia sp. subsp. Brugia malayi (strain TRS) protein is Deoxyuridine 5'-triphosphate nucleotidohydrolase.